The primary structure comprises 92 residues: Protein canopy homolog 1 (92 aa).

It belongs to the canopy family.

The chain is Protein canopy homolog 1 (CNPY1) from Homo sapiens (Human).